A 209-amino-acid polypeptide reads, in one-letter code: Kynurenine formamidase (209 aa).

Phe18 is a substrate binding site. Residues His48, His52, and Asp54 each coordinate Zn(2+). His58 acts as the Proton donor/acceptor in catalysis. Zn(2+) contacts are provided by His160 and Glu172.

This sequence belongs to the Cyclase 1 superfamily. KynB family. In terms of assembly, homodimer. It depends on Zn(2+) as a cofactor.

It catalyses the reaction N-formyl-L-kynurenine + H2O = L-kynurenine + formate + H(+). Its pathway is amino-acid degradation; L-tryptophan degradation via kynurenine pathway; L-kynurenine from L-tryptophan: step 2/2. Catalyzes the hydrolysis of N-formyl-L-kynurenine to L-kynurenine, the second step in the kynurenine pathway of tryptophan degradation. This is Kynurenine formamidase from Bordetella avium (strain 197N).